The sequence spans 284 residues: Pantothenate synthetase (284 aa).

30–37 (MGNLHDGH) is an ATP binding site. Catalysis depends on His-37, which acts as the Proton donor. Gln-61 provides a ligand contact to (R)-pantoate. Gln-61 lines the beta-alanine pocket. ATP is bound at residue 149-152 (GEKD). Position 155 (Gln-155) interacts with (R)-pantoate. Residues Ile-178 and 186 to 189 (LSSR) each bind ATP.

Belongs to the pantothenate synthetase family. Homodimer.

Its subcellular location is the cytoplasm. The enzyme catalyses (R)-pantoate + beta-alanine + ATP = (R)-pantothenate + AMP + diphosphate + H(+). The protein operates within cofactor biosynthesis; (R)-pantothenate biosynthesis; (R)-pantothenate from (R)-pantoate and beta-alanine: step 1/1. Catalyzes the condensation of pantoate with beta-alanine in an ATP-dependent reaction via a pantoyl-adenylate intermediate. This chain is Pantothenate synthetase, found in Salmonella paratyphi A (strain ATCC 9150 / SARB42).